A 1256-amino-acid polypeptide reads, in one-letter code: Nephrin (1256 aa).

An N-terminal signal peptide occupies residues 1-35; that stretch reads MGAKEATVRGPGASPVHRTCHLIPLLLAGMLTTGL. Residues 36–1078 lie on the Extracellular side of the membrane; the sequence is AQSPVPTSAP…PGPPRLPLLP (1043 aa). 6 consecutive Ig-like C2-type domains span residues 39–144, 149–247, 256–347, 354–448, 454–554, and 558–649; these read PVPT…VILS, PKVL…ASFT, PPVI…RSIT, PSAV…KSLT, PAQK…TQLV, and PPTN…ETVS. N-linked (GlcNAc...) asparagine glycosylation is present at asparagine 54. Intrachain disulfides connect cysteine 67/cysteine 125, cysteine 174/cysteine 231, and cysteine 279/cysteine 331. 2 N-linked (GlcNAc...) asparagine glycosylation sites follow: asparagine 370 and asparagine 415. A disulfide bridge connects residues cysteine 375 and cysteine 431. Serine 446 carries the post-translational modification Phosphoserine. Cysteine 479 and cysteine 542 are disulfide-bonded. A disordered region spans residues 491-516; the sequence is TWLKDSRPVNDPRQSQEPRRVQLGSV. Residues 494–510 show a composition bias toward basic and acidic residues; that stretch reads KDSRPVNDPRQSQEPRR. Asparagine 561, asparagine 578, asparagine 591, and asparagine 722 each carry an N-linked (GlcNAc...) asparagine glycan. A disulfide bridge links cysteine 581 with cysteine 637. Ig-like C2-type domains are found at residues 754-846 and 852-953; these read PTIR…LVRL and PQVD…VSIS. Disulfide bonds link cysteine 775–cysteine 830 and cysteine 877–cysteine 934. A Fibronectin type-III domain is found at 957 to 1051; the sequence is PPLGLKVVSV…GIQVSITTPG (95 aa). The interval 1048 to 1071 is disordered; the sequence is TTPGLDQAPEDTDQPLPTEQPPGP. A helical membrane pass occupies residues 1079 to 1099; it reads VLFAVGGLLLLSNASCVGGLL. Residues 1100–1256 lie on the Cytoplasmic side of the membrane; sequence WRRRLRRLAE…LPFELRGHLV (157 aa). A Phosphoserine modification is found at serine 1112. A compositionally biased stretch (basic and acidic residues) spans 1112–1128; that stretch reads SEKTEAGSEEDRIRNEY. The disordered stretch occupies residues 1112–1143; it reads SEKTEAGSEEDRIRNEYEESQWTGDRDTRSST. Threonine 1115 carries the post-translational modification Phosphothreonine. Position 1119 is a phosphoserine (serine 1119). Tyrosine 1208 is modified (phosphotyrosine; by FYN).

This sequence belongs to the immunoglobulin superfamily. In terms of assembly, interacts with NPHS2 and with CD2AP (via C-terminal domain). Interacts with MAGI1 (via PDZ 2 and 3 domains) forming a tripartite complex with IGSF5/JAM4. Forms a complex with ACTN4, CASK, IQGAP1, MAGI2, SPTAN1 and SPTBN1. Interacts with DDN; the interaction is direct. Self-associates (via the Ig-like domains). Also interacts (via the Ig-like domains) with KIRREL1 and KIRREL2; the interaction with KIRREL1 is dependent on KIRREL1 glycosylation. Interacts with KIRREL3. Interacts with phosphatidylinositol 3-kinase regulatory subunit PIK3R1; the interaction is reduced by high glucose levels. Phosphorylated at Tyr-1208 by FYN, leading to the recruitment and activation of phospholipase C-gamma-1/PLCG1. Tyrosine phosphorylation is reduced by high glucose levels. Dephosphorylated by tensin TNS2 which leads to reduced binding of NPHN1 to PIK3R1. Expressed in kidney glomeruli. In the embryo, expressed in the mesonephric kidney at 11 dpc with strong expression in cranial tubules with podocyte-like structures. Expression is observed in the podocytes of the developing kidney from 13 dpc. High expression is also detected in the developing cerebellum, hindbrain, spinal cord, retina and hypothalamus. Expressed in skeletal muscle during myoblast fusion such as in the adult following acute injury and in the embryo but not detected in uninjured adult skeletal muscle. Isoform 1 and isoform 2 are expressed in the newborn brain and developing cerebellum. Isoform 1 is the predominant isoform in adult kidney.

Its subcellular location is the cell membrane. Its function is as follows. Seems to play a role in the development or function of the kidney glomerular filtration barrier. Regulates glomerular vascular permeability. May anchor the podocyte slit diaphragm to the actin cytoskeleton. Plays a role in skeletal muscle formation through regulation of myoblast fusion. The polypeptide is Nephrin (Nphs1) (Mus musculus (Mouse)).